Reading from the N-terminus, the 987-residue chain is 110 kDa U5 small nuclear ribonucleoprotein component CLO (987 aa).

The interval 1-54 (MESSLYDEFGNYVGPEIESDRDSDDEVEDEDLQDKHLEENGSDGEQGPGGSNGW) is disordered. A compositionally biased stretch (acidic residues) spans 17–32 (IESDRDSDDEVEDEDL). Positions 136 to 422 (ALVRNVALVG…LGVTLSNSAY (287 aa)) constitute a tr-type G domain. The segment at 145 to 152 (GHLQHGKT) is G1. 145–152 (GHLQHGKT) serves as a coordination point for GTP. Positions 189–193 (NISIK) are G2. A G3 region spans residues 215–218 (DTPG). Residues 215-219 (DTPGH) and 269-272 (NKVD) contribute to the GTP site. The G4 stretch occupies residues 269 to 272 (NKVD). The G5 stretch occupies residues 395–397 (YSQ).

The protein belongs to the TRAFAC class translation factor GTPase superfamily. Classic translation factor GTPase family. Interacts with BRR2A and PRP8A. In terms of tissue distribution, expressed in flower buds, open flowers and siliques. Expressed at low levels in rosettes leaves, cauline leaves and stems.

It is found in the nucleus speckle. In terms of biological role, splicing factor involved in pre-mRNA splicing and component of the spliceosome. Essential for reproduction. In female gametophyte, is necessary for the egg cell and central cell fate determination and hence reproductive success. Involved in a mechanism that prevents accessory cells from adopting gametic cell fate. Is necessary to restrict LIS expression to interfere with egg-cell specification. Probable component of U5 small nuclear ribonucleoprotein (snRNP) that is required for pre-mRNA splicing. Plays an essential role in female gametogenesis and embryo development. Required for the control of polarized cell growth and cell proliferation during floral organ morphogenesis. In Arabidopsis thaliana (Mouse-ear cress), this protein is 110 kDa U5 small nuclear ribonucleoprotein component CLO.